We begin with the raw amino-acid sequence, 177 residues long: Putative membrane protein 165 (177 aa).

The Intravirion segment spans residues 1 to 7; that stretch reads MYLVLLI. The chain crosses the membrane as a helical span at residues 8-24; it reads AVILFIIVILMIFLISG. Residues 25–166 lie on the Virion surface side of the membrane; that stretch reads LFYPEQEPAL…DPHPALKSKN (142 aa).

It belongs to the asfivirus envelope protein p22 family.

It localises to the virion membrane. Its subcellular location is the host cell membrane. The sequence is that of Putative membrane protein 165 from African swine fever virus (isolate Pig/Kenya/KEN-50/1950) (ASFV).